Consider the following 115-residue polypeptide: NADH-ubiquinone oxidoreductase chain 3 (115 aa).

Transmembrane regions (helical) follow at residues 3-23 (LMIT…IAFW), 55-75 (FFLV…LLPL), and 86-106 (LTLL…AYEW).

It belongs to the complex I subunit 3 family. In terms of assembly, core subunit of respiratory chain NADH dehydrogenase (Complex I) which is composed of 45 different subunits. Interacts with TMEM186. Interacts with TMEM242.

The protein localises to the mitochondrion inner membrane. The catalysed reaction is a ubiquinone + NADH + 5 H(+)(in) = a ubiquinol + NAD(+) + 4 H(+)(out). Its function is as follows. Core subunit of the mitochondrial membrane respiratory chain NADH dehydrogenase (Complex I) which catalyzes electron transfer from NADH through the respiratory chain, using ubiquinone as an electron acceptor. Essential for the catalytic activity of complex I. This chain is NADH-ubiquinone oxidoreductase chain 3, found in Loxodonta africana (African elephant).